A 377-amino-acid chain; its full sequence is 23S rRNA (uracil(747)-C(5))-methyltransferase RlmC (377 aa).

[4Fe-4S] cluster-binding residues include Cys-3, Cys-11, Cys-14, and Cys-87. Positions 212, 241, 262, and 307 each coordinate S-adenosyl-L-methionine. Residue Cys-334 is the Nucleophile of the active site.

The protein belongs to the class I-like SAM-binding methyltransferase superfamily. RNA M5U methyltransferase family. RlmC subfamily.

It catalyses the reaction uridine(747) in 23S rRNA + S-adenosyl-L-methionine = 5-methyluridine(747) in 23S rRNA + S-adenosyl-L-homocysteine + H(+). Functionally, catalyzes the formation of 5-methyl-uridine at position 747 (m5U747) in 23S rRNA. The sequence is that of 23S rRNA (uracil(747)-C(5))-methyltransferase RlmC from Xenorhabdus bovienii (strain SS-2004) (Xenorhabdus nematophila subsp. bovienii).